We begin with the raw amino-acid sequence, 306 residues long: Acetyl-coenzyme A carboxylase carboxyl transferase subunit beta (306 aa).

A CoA carboxyltransferase N-terminal domain is found at 25 to 294 (VWTKCDSCGQ…PQDPLPHEPR (270 aa)). 4 residues coordinate Zn(2+): Cys29, Cys32, Cys48, and Cys51. The C4-type zinc finger occupies 29–51 (CDSCGQVLYRAELERNLEVCPKC). The disordered stretch occupies residues 281 to 306 (NRPQPQDPLPHEPRPDAVPEDHQDEV). Over residues 289-306 (LPHEPRPDAVPEDHQDEV) the composition is skewed to basic and acidic residues.

The protein belongs to the AccD/PCCB family. Acetyl-CoA carboxylase is a heterohexamer composed of biotin carboxyl carrier protein (AccB), biotin carboxylase (AccC) and two subunits each of ACCase subunit alpha (AccA) and ACCase subunit beta (AccD). The cofactor is Zn(2+).

It is found in the cytoplasm. The enzyme catalyses N(6)-carboxybiotinyl-L-lysyl-[protein] + acetyl-CoA = N(6)-biotinyl-L-lysyl-[protein] + malonyl-CoA. The protein operates within lipid metabolism; malonyl-CoA biosynthesis; malonyl-CoA from acetyl-CoA: step 1/1. Its function is as follows. Component of the acetyl coenzyme A carboxylase (ACC) complex. Biotin carboxylase (BC) catalyzes the carboxylation of biotin on its carrier protein (BCCP) and then the CO(2) group is transferred by the transcarboxylase to acetyl-CoA to form malonyl-CoA. This is Acetyl-coenzyme A carboxylase carboxyl transferase subunit beta from Sodalis glossinidius (strain morsitans).